Consider the following 199-residue polypeptide: Pyridoxal 5'-phosphate synthase subunit PdxT (199 aa).

Residue 51-53 participates in L-glutamine binding; sequence GES. Residue C83 is the Nucleophile of the active site. L-glutamine contacts are provided by residues R110 and 137-138; that span reads IR. Active-site charge relay system residues include H172 and E174.

Belongs to the glutaminase PdxT/SNO family. As to quaternary structure, in the presence of PdxS, forms a dodecamer of heterodimers. Only shows activity in the heterodimer.

The enzyme catalyses aldehydo-D-ribose 5-phosphate + D-glyceraldehyde 3-phosphate + L-glutamine = pyridoxal 5'-phosphate + L-glutamate + phosphate + 3 H2O + H(+). The catalysed reaction is L-glutamine + H2O = L-glutamate + NH4(+). Its pathway is cofactor biosynthesis; pyridoxal 5'-phosphate biosynthesis. Functionally, catalyzes the hydrolysis of glutamine to glutamate and ammonia as part of the biosynthesis of pyridoxal 5'-phosphate. The resulting ammonia molecule is channeled to the active site of PdxS. In Thermoplasma volcanium (strain ATCC 51530 / DSM 4299 / JCM 9571 / NBRC 15438 / GSS1), this protein is Pyridoxal 5'-phosphate synthase subunit PdxT.